A 136-amino-acid polypeptide reads, in one-letter code: Fluoride-specific ion channel FluC (136 aa).

4 helical membrane passes run 3 to 23 (TLPP…GAVL), 46 to 66 (ATLA…GVLF), 78 to 98 (LLIG…SLEV), and 109 to 129 (FAAL…VFGL). 2 residues coordinate Na(+): Gly86 and Thr89.

This sequence belongs to the fluoride channel Fluc/FEX (TC 1.A.43) family.

It localises to the cell inner membrane. It carries out the reaction fluoride(in) = fluoride(out). Na(+) is not transported, but it plays an essential structural role and its presence is essential for fluoride channel function. Functionally, fluoride-specific ion channel. Important for reducing fluoride concentration in the cell, thus reducing its toxicity. The protein is Fluoride-specific ion channel FluC of Erythrobacter litoralis (strain HTCC2594).